The following is a 149-amino-acid chain: Stathmin (149 aa).

N-acetylalanine is present on Ala-2. Ser-4 carries the post-translational modification Phosphoserine. Residues 4–145 form the SLD domain; sequence SDIQVKELEK…NKESKDPADE (142 aa). Lys-9 carries the N6-acetyllysine modification. A Phosphoserine; by PKA modification is found at Ser-16. Ser-25 is modified (phosphoserine; by CDK1, MAPK1 and MAPK3). A disordered region spans residues 27-46; sequence RSKESVPDFPLSPPKKKDLS. Lys-29 carries the post-translational modification N6-methyllysine. Position 31 is a phosphoserine (Ser-31). Residue Ser-38 is modified to Phosphoserine; by CDK1, MAPK1 and MAPK3. Positions 41–140 form a coiled coil; it reads KKKDLSLEEI…EEVRKNKESK (100 aa). The residue at position 63 (Ser-63) is a Phosphoserine; by PKA. Residues Lys-100 and Lys-119 each carry the N6-acetyllysine modification. The span at 104-143 shows a compositional bias: basic and acidic residues; sequence KMEANKENREAQMAAKLERLREKDKHVEEVRKNKESKDPA. The segment at 104 to 149 is disordered; sequence KMEANKENREAQMAAKLERLREKDKHVEEVRKNKESKDPADETEAD.

Belongs to the stathmin family. In terms of assembly, binds to two alpha/beta-tubulin heterodimers. Interacts with KIST. In terms of processing, many different phosphorylated forms are observed depending on specific combinations among the sites which can be phosphorylated. MAPK is responsible for the phosphorylation of stathmin in response to NGF. Phosphorylation at Ser-16 seems to be required for neuron polarization. As to expression, highly expressed in the lateral nucleus of the amygdala.

The protein localises to the cytoplasm. It is found in the cytoskeleton. Involved in the regulation of the microtubule (MT) filament system by destabilizing microtubules. Prevents assembly and promotes disassembly of microtubules. Phosphorylation at Ser-16 may be required for axon formation during neurogenesis. Involved in the control of the learned and innate fear. This is Stathmin (Stmn1) from Mus musculus (Mouse).